A 482-amino-acid chain; its full sequence is MVRVRFAPSPTGQLHIGGARTALFNYLFAKKHNGKFILRIEDTDLERSREEWAKAIMKSLKWLGIEWDEGPDIGGEFGPYFQSQRKDIYMEYINKLLEEGKAYYCFCSQEEIEKEREIAKQNKVSYKYSKKCRNISLEEAKRRIKNGEKAAVRIKAPQDGVTVVHDIIRGDVEFSNDQLDDFIILKSDGNPTYNFVCVVDDYFMKISHVIRAEEHLSNTPKQLIIYQALNLTPPQFAHVPMILAPDRSKLSKRHGATSVEEFFENGYLKEAIVNYLLLLGWSPGEDRTIIGLDEAIEKFELEKVSKNAAIYDVNKLTWINGHYLKEIHIEDLYERMKYFYSKKGIEIERFDKEYVKSALKLVREKVKTLVEVVDASTYFFDDSYEYDQKGVEKYLTPENLNIVKSLLDELKNLEPFSAPEIESLVRKKAESLNVKAANIIHTIRVCISGRTVTPGLFEMMEVLGKKEVVKRIERTCEKFLIK.

The short motif at 8 to 18 (PSPTGQLHIGG) is the 'HIGH' region element. A 'KMSKS' region motif is present at residues 249 to 253 (KLSKR). K252 serves as a coordination point for ATP.

It belongs to the class-I aminoacyl-tRNA synthetase family. Glutamate--tRNA ligase type 1 subfamily. As to quaternary structure, monomer.

It is found in the cytoplasm. It carries out the reaction tRNA(Glu) + L-glutamate + ATP = L-glutamyl-tRNA(Glu) + AMP + diphosphate. Its function is as follows. Catalyzes the attachment of glutamate to tRNA(Glu) in a two-step reaction: glutamate is first activated by ATP to form Glu-AMP and then transferred to the acceptor end of tRNA(Glu). This is Glutamate--tRNA ligase 2 from Caldicellulosiruptor saccharolyticus (strain ATCC 43494 / DSM 8903 / Tp8T 6331).